The primary structure comprises 141 residues: Pheromone-binding protein-related protein 6 (141 aa).

Positions 1-16 are cleaved as a signal peptide; sequence MVKYPLILLLIGCAAA. 3 disulfide bridges follow: Cys-41/Cys-72, Cys-68/Cys-120, and Cys-111/Cys-129.

It belongs to the PBP/GOBP family. In terms of tissue distribution, antenna. Mostly expressed in two types of sensory hairs, sensilla trichodea and small sensilla basiconica, in the ventro-lateral region of the third antennal segment (at protein level).

The protein localises to the secreted. This Drosophila melanogaster (Fruit fly) protein is Pheromone-binding protein-related protein 6 (Obp83b).